Consider the following 136-residue polypeptide: Evasin P991 (136 aa).

The signal sequence occupies residues 1–28; sequence MHSTIVYACLLALAVFVALHGTPLAALA. 7 N-linked (GlcNAc...) asparagine glycosylation sites follow: Asn-41, Asn-61, Asn-64, Asn-78, Asn-92, Asn-100, and Asn-122. 4 disulfide bridges follow: Cys-55/Cys-77, Cys-73/Cys-114, Cys-90/Cys-119, and Cys-109/Cys-128.

The protein localises to the secreted. Its function is as follows. Salivary chemokine-binding protein which has chemokine-neutralizing activity and binds to host chemokines CCL2, CCL3, CCL3L1, CCL4, CCL4L1, CCL5, CCL6, CCL7, CCL8, CCL9, CCL11, CCL12, CCL13, CCL14, CCL16, CCL17, CCL18, CCL19, CCL22, CCL23, CCL24 and CCL27. This is Evasin P991 from Amblyomma cajennense (Cayenne tick).